The primary structure comprises 236 residues: RNA-binding protein 24 (236 aa).

The 78-residue stretch at 11–88 (TKIFVGGLPY…RKANVNLAYL (78 aa)) folds into the RRM domain. Residues 175-199 (QYPYAASPAAAGYVTTGGYSYAVQQ) form a necessary for interaction with EIF4E region.

In terms of assembly, interacts with EIF4E; this interaction prevents EIF4E from binding to p53/TP53 mRNA and inhibits the assembly of translation initiation complex. In terms of tissue distribution, expressed strongly in heart and skeletal muscles. Weakly expressed in intestine, aorta, liver, lung, kidney, uterus and bladder.

The protein localises to the nucleus. It is found in the cytoplasm. Functionally, multifunctional RNA-binding protein involved in the regulation of pre-mRNA splicing, mRNA stability and mRNA translation important for cell fate decision and differentiation. Plays a major role in pre-mRNA alternative splicing regulation. Mediates preferentially muscle-specific exon inclusion in numerous mRNAs important for striated cardiac and skeletal muscle cell differentiation. Binds to intronic splicing enhancer (ISE) composed of stretches of GU-rich motifs localized in flanking intron of exon that will be included by alternative splicing. Involved in embryonic stem cell (ESC) transition to cardiac cell differentiation by promoting pre-mRNA alternative splicing events of several pluripotency and/or differentiation genes. Plays a role in the regulation of mRNA stability. Binds to 3'-untranslated region (UTR) AU-rich elements in target transcripts, such as CDKN1A and MYOG, leading to maintain their stabilities. Involved in myogenic differentiation by regulating MYOG levels. Binds to multiple regions in the mRNA 3'-UTR of TP63, hence inducing its destabilization. Also promotes the destabilization of the CHRM2 mRNA via its binding to a region in the coding sequence. Plays a role in the regulation of mRNA translation. Mediates repression of p53/TP53 mRNA translation through its binding to U-rich element in the 3'-UTR, hence preventing EIF4E from binding to p53/TP53 mRNA and translation initiation. Binds to a huge amount of mRNAs. Required for embryonic heart development, sarcomer and M-band formation in striated muscles. Together with RBM20, promotes the expression of short isoforms of PDLIM5/ENH in cardiomyocytes. This Mus musculus (Mouse) protein is RNA-binding protein 24.